The sequence spans 338 residues: 1-aminocyclopropane-1-carboxylate deaminase (338 aa).

Lysine 51 carries the post-translational modification N6-(pyridoxal phosphate)lysine. The active-site Nucleophile is the serine 78.

It belongs to the ACC deaminase/D-cysteine desulfhydrase family. In terms of assembly, homotrimer. It depends on pyridoxal 5'-phosphate as a cofactor.

It carries out the reaction 1-aminocyclopropane-1-carboxylate + H2O = 2-oxobutanoate + NH4(+). Functionally, catalyzes a cyclopropane ring-opening reaction, the irreversible conversion of 1-aminocyclopropane-1-carboxylate (ACC) to ammonia and alpha-ketobutyrate. Allows growth on ACC as a nitrogen source. This chain is 1-aminocyclopropane-1-carboxylate deaminase, found in Burkholderia ambifaria (strain ATCC BAA-244 / DSM 16087 / CCUG 44356 / LMG 19182 / AMMD) (Burkholderia cepacia (strain AMMD)).